We begin with the raw amino-acid sequence, 366 residues long: Alanine racemase (366 aa).

Lysine 40 (proton acceptor; specific for D-alanine) is an active-site residue. The residue at position 40 (lysine 40) is an N6-(pyridoxal phosphate)lysine. Arginine 136 serves as a coordination point for substrate. The Proton acceptor; specific for L-alanine role is filled by tyrosine 263. Residue methionine 310 coordinates substrate.

The protein belongs to the alanine racemase family. Pyridoxal 5'-phosphate is required as a cofactor.

The enzyme catalyses L-alanine = D-alanine. It functions in the pathway amino-acid biosynthesis; D-alanine biosynthesis; D-alanine from L-alanine: step 1/1. In terms of biological role, catalyzes the interconversion of L-alanine and D-alanine. May also act on other amino acids. This is Alanine racemase (alr) from Streptococcus pyogenes serotype M1.